A 506-amino-acid polypeptide reads, in one-letter code: MDLAFPHVCLWTLLAFVLTWTVFYVNNRRKKVAKLPDAATEVRRDGDADVIIVGAGVGGSALAYALAKDGRRVHVIERDMREPVRMMGEFMQPGGRLLLSKLGLEDCLEGIDEQIATGLAVYKDGQKALVSFPEDNDFPYEPTGRAFYNGRFVQRLRQKASSLPTVQLEEGTVKSLIEEKGVIKGVTYKNSAGEETTAFAPLTVVCDGCYSNLRRSVNDNNAEVISYQVGYVSKNCQLEDPEKLKLIMSKPSFTMLYQISSTDVRCVMEIFPGNIPSISNGEMAVYLKNTMAPQVPPELRKIFLKGIDEGAQIKAMPTKRMEATLSEKQGVIVLGDAFNMRHPAIASGMMVVLSDILILRRLLQPLRNLSDANKVSEVIKSFYVIRKPMSATVNTLGNAFSQVLIASTDEAKEAMRQGCFDYLSSGGFRTSGMMALLGGMNPRPLSLIFHLCGITLSSIGQLLSPFPSPLGIWHSLRLFGAEGVSQMLSPAYAAAYRKSYMTATAL.

Helical transmembrane passes span 3–23 (LAFPHVCLWTLLAFVLTWTVF) and 47–67 (DADVIIVGAGVGGSALAYALA). Residues 57–58 (VG), 77–78 (ER), R85, F90, R157, V173, D336, and M349 contribute to the FAD site. Residues 447-467 (LIFHLCGITLSSIGQLLSPFP) form a helical membrane-spanning segment.

Belongs to the squalene monooxygenase family. FAD serves as cofactor.

Its subcellular location is the membrane. It carries out the reaction squalene + reduced [NADPH--hemoprotein reductase] + O2 = (S)-2,3-epoxysqualene + oxidized [NADPH--hemoprotein reductase] + H2O + H(+). Its pathway is terpene metabolism; lanosterol biosynthesis; lanosterol from farnesyl diphosphate: step 2/3. Its function is as follows. Catalyzes the stereospecific oxidation of squalene to (S)-2,3-epoxysqualene, and is considered to be a rate-limiting enzyme in steroid biosynthesis. This is Squalene monooxygenase 1,1 (SQP1,1) from Brassica napus (Rape).